We begin with the raw amino-acid sequence, 332 residues long: CMRF35-like molecule 9 (332 aa).

The N-terminal stretch at M1 to A18 is a signal peptide. An Ig-like V-type domain is found at L19–S121. Residues L19–R247 lie on the Extracellular side of the membrane. A disulfide bridge connects residues C37 and C107. N96 carries N-linked (GlcNAc...) asparagine glycosylation. Residues T137, T143, T144, T155, T161, T170, T171, T177, T187, and T195 are each glycosylated (O-linked (GalNAc...) threonine). The segment at L146 to P239 is disordered. Residues Q147–P158 show a composition bias toward low complexity. A compositionally biased stretch (low complexity) spans A168 to A181. The segment covering G186 to P205 has biased composition (polar residues). O-linked (GalNAc...) serine glycosylation occurs at S196. O-linked (GalNAc...) threonine glycosylation is found at T199 and T201. The O-linked (GalNAc...) serine glycan is linked to S202. A glycan (O-linked (GalNAc...) threonine) is linked at T207. Residues S208, S213, S214, and S222 are each glycosylated (O-linked (GalNAc...) serine). Over residues L220–P239 the composition is skewed to polar residues. T223 is a glycosylation site (O-linked (GalNAc...) threonine). The O-linked (GalNAc...) serine glycan is linked to S224. Residue T228 is glycosylated (O-linked (GalNAc...) threonine). O-linked (GalNAc...) serine glycosylation is found at S229 and S237. The chain crosses the membrane as a helical span at residues I248 to C268. Residues S269–A332 lie on the Cytoplasmic side of the membrane.

This sequence belongs to the CD300 family. Post-translationally, O-glycosylated with sialylated oligosaccharides. As to expression, highly expressed in heart, skeletal muscle and placenta.

It is found in the apical cell membrane. Its subcellular location is the basolateral cell membrane. The protein localises to the endosome. It localises to the multivesicular body membrane. Receptor which may mediate L-selectin-dependent lymphocyte rollings. Binds SELL in a calcium dependent manner. Binds lymphocyte. This is CMRF35-like molecule 9 (CD300LG) from Homo sapiens (Human).